Reading from the N-terminus, the 358-residue chain is G-protein coupled receptor 20 (358 aa).

Residues 1-48 (MPSVSPAGPSAGAVPNATAVTTVRTNASGLEVPLFHLFARLDEELHGT) lie on the Extracellular side of the membrane. Asn-16 and Asn-26 each carry an N-linked (GlcNAc...) asparagine glycan. A helical transmembrane segment spans residues 49–69 (FPGLWLALMAVHGAIFLAGLV). Residues 70–86 (LNGLALYVFCCRTRAKT) are Cytoplasmic-facing. A helical membrane pass occupies residues 87–107 (PSVIYTINLVVTDLLVGLSLP). The Extracellular portion of the chain corresponds to 108–125 (TRFAVYYGARGCLRCAFP). Residues 126–146 (HVLGYFLNMHCSILFLTCICV) form a helical membrane-spanning segment. Residues 147–168 (DRYLAIVRPEGSRRCRQPACAR) lie on the Cytoplasmic side of the membrane. A helical transmembrane segment spans residues 169–189 (AVCAFVWLAAGAVTLSVLGVT). Residues 190–196 (GSRPCCR) are Extracellular-facing. A helical membrane pass occupies residues 197–217 (VFALTVLEFLLPLLVISVFTG). At 218-238 (RIMCALSRPGLLHQGRQRRVR) the chain is on the cytoplasmic side. The chain crosses the membrane as a helical span at residues 239 to 259 (AMQLLLTVLIIFLVCFTPFHA). Residues 260–275 (RQVAVALWPDMPHHTS) are Extracellular-facing. Residues 276-296 (LVVYHVAVTLSSLNSCMDPIV) form a helical membrane-spanning segment. Residues 297–358 (YCFVTSGFQA…TQALANGPEA (62 aa)) lie on the Cytoplasmic side of the membrane. Residues 315–339 (HGEREPSSGDVVSMHRSSKGSGRHH) are disordered. Residues 330-339 (RSSKGSGRHH) are compositionally biased toward basic residues.

This sequence belongs to the G-protein coupled receptor 1 family. Ubiquitous with highest levels in intestinal tissues. In the brain detected in thalamus, putamen, and caudate, but not in frontal cortex, pons and hypothalamus.

It localises to the cell membrane. Orphan receptor with constitutive G(i) signaling activity that activate cyclic AMP. This Homo sapiens (Human) protein is G-protein coupled receptor 20 (GPR20).